The primary structure comprises 380 residues: Flap endonuclease 1 (380 aa).

Residues 1 to 104 (MGIKGLSQLI…GELTKRAEKR (104 aa)) form an N-domain region. Asp34 contacts Mg(2+). Residues Arg47 and Arg70 each coordinate DNA. The Mg(2+) site is built by Asp86, Glu158, Glu160, Asp179, and Asp181. The I-domain stretch occupies residues 122-253 (DIDKFNRRLV…KKAVELINKH (132 aa)). Glu158 lines the DNA pocket. Gly231 and Asp233 together coordinate DNA. Asp233 serves as a coordination point for Mg(2+). The tract at residues 336–344 (TQGRLDSFF) is interaction with PCNA. A disordered region spans residues 342-380 (SFFKVLPSTPNPKRKIEDKKTPASKKAKTTGGKPGRKPK). A compositionally biased stretch (basic residues) spans 363–380 (PASKKAKTTGGKPGRKPK).

Belongs to the XPG/RAD2 endonuclease family. FEN1 subfamily. As to quaternary structure, interacts with PCNA. Three molecules of FEN1 bind to one PCNA trimer with each molecule binding to one PCNA monomer. PCNA stimulates the nuclease activity without altering cleavage specificity. It depends on Mg(2+) as a cofactor. Post-translationally, phosphorylated. Phosphorylation upon DNA damage induces relocalization to the nuclear plasma.

Its subcellular location is the nucleus. The protein localises to the nucleolus. It is found in the nucleoplasm. It localises to the mitochondrion. Functionally, structure-specific nuclease with 5'-flap endonuclease and 5'-3' exonuclease activities involved in DNA replication and repair. During DNA replication, cleaves the 5'-overhanging flap structure that is generated by displacement synthesis when DNA polymerase encounters the 5'-end of a downstream Okazaki fragment. It enters the flap from the 5'-end and then tracks to cleave the flap base, leaving a nick for ligation. Also involved in the long patch base excision repair (LP-BER) pathway, by cleaving within the apurinic/apyrimidinic (AP) site-terminated flap. Acts as a genome stabilization factor that prevents flaps from equilibrating into structures that lead to duplications and deletions. Also possesses 5'-3' exonuclease activity on nicked or gapped double-stranded DNA, and exhibits RNase H activity. Also involved in replication and repair of rDNA and in repairing mitochondrial DNA. The chain is Flap endonuclease 1 from Aedes aegypti (Yellowfever mosquito).